We begin with the raw amino-acid sequence, 484 residues long: MNIKDIKKINFFISEKKNKNIHLIGIGGAGMMGIALILLKLGYKVSGSDLLESLMIKKLINLGATIYLQHSEKNIKNVDFIIKSSAISSNNKEILAAKKRNIPILLRAEMIEILMSFKKGIAVSGTHGKTTTTSMIADIFIDSGLDPTVINGGLIKSINSYAKLGSSSYFITEADESDASFLYLNPNIIIVTNIEPDHIDHYDNSFKKLKQTFLIFLKKITLYGTAIVCIDNNAICDILTNLKCKIITYGFNKNADVRIFLYKQNNFIGHFYIILKNNKKLNIILNIPGKHNALNAAAAIALAIHEGINNDLMIASLKNFQGTCRRFEFLGFLSIDQGFDKRANCMLIDDYGHHPTELSETIKTIRISWPNKNLIMIFQPHRYTRTYNLYHDFVQTLSQVDVLLILHVYSANEKFIVGADSLSLFNDIKKLGKNYVTLISNHNMILDTLIQTLQGNDIILIQGAGNIDTIAHKILIKKTKKVIK.

An ATP-binding site is contributed by 125-131; the sequence is GTHGKTT.

This sequence belongs to the MurCDEF family.

The protein localises to the cytoplasm. It catalyses the reaction UDP-N-acetyl-alpha-D-muramate + L-alanine + ATP = UDP-N-acetyl-alpha-D-muramoyl-L-alanine + ADP + phosphate + H(+). It functions in the pathway cell wall biogenesis; peptidoglycan biosynthesis. Cell wall formation. The protein is UDP-N-acetylmuramate--L-alanine ligase of Buchnera aphidicola subsp. Acyrthosiphon pisum (strain 5A).